Reading from the N-terminus, the 310-residue chain is Protein translocase subunit SecF (310 aa).

The next 6 membrane-spanning stretches (helical) occupy residues Phe20–Tyr42, Ile140–Val160, Trp164–Phe184, Leu194–Ile214, Ile246–Ala266, and Val272–Ile292.

Belongs to the SecD/SecF family. SecF subfamily. Forms a complex with SecD. Part of the essential Sec protein translocation apparatus which comprises SecA, SecYEG and auxiliary proteins SecDF-YajC and YidC.

The protein resides in the cell inner membrane. Its function is as follows. Part of the Sec protein translocase complex. Interacts with the SecYEG preprotein conducting channel. SecDF uses the proton motive force (PMF) to complete protein translocation after the ATP-dependent function of SecA. This chain is Protein translocase subunit SecF, found in Rickettsia canadensis (strain McKiel).